Reading from the N-terminus, the 372-residue chain is NAD(P)H-quinone oxidoreductase subunit 1 (372 aa).

The next 8 helical transmembrane spans lie at 27–47 (VLWM…GVLV), 97–117 (FLFT…YLIV), 128–148 (VGAG…GLLM), 176–196 (LALA…IDIV), 204–224 (ILGW…IAAL), 254–274 (FALF…LVSI), 308–328 (ALGI…AILL), and 347–367 (FLLP…LTFP).

This sequence belongs to the complex I subunit 1 family. In terms of assembly, NDH-1 is composed of at least 11 different subunits.

It is found in the cellular thylakoid membrane. It catalyses the reaction a plastoquinone + NADH + (n+1) H(+)(in) = a plastoquinol + NAD(+) + n H(+)(out). The enzyme catalyses a plastoquinone + NADPH + (n+1) H(+)(in) = a plastoquinol + NADP(+) + n H(+)(out). NDH-1 shuttles electrons from an unknown electron donor, via FMN and iron-sulfur (Fe-S) centers, to quinones in the respiratory and/or the photosynthetic chain. The immediate electron acceptor for the enzyme in this species is believed to be plastoquinone. Couples the redox reaction to proton translocation, and thus conserves the redox energy in a proton gradient. This is NAD(P)H-quinone oxidoreductase subunit 1 from Synechococcus elongatus (strain ATCC 33912 / PCC 7942 / FACHB-805) (Anacystis nidulans R2).